Consider the following 428-residue polypeptide: Light-independent protochlorophyllide reductase subunit N (428 aa).

Residues cysteine 31, cysteine 56, and cysteine 117 each coordinate [4Fe-4S] cluster.

Belongs to the BchN/ChlN family. Protochlorophyllide reductase is composed of three subunits; BchL, BchN and BchB. Forms a heterotetramer of two BchB and two BchN subunits. The cofactor is [4Fe-4S] cluster.

It catalyses the reaction chlorophyllide a + oxidized 2[4Fe-4S]-[ferredoxin] + 2 ADP + 2 phosphate = protochlorophyllide a + reduced 2[4Fe-4S]-[ferredoxin] + 2 ATP + 2 H2O. The protein operates within porphyrin-containing compound metabolism; bacteriochlorophyll biosynthesis (light-independent). Component of the dark-operative protochlorophyllide reductase (DPOR) that uses Mg-ATP and reduced ferredoxin to reduce ring D of protochlorophyllide (Pchlide) to form chlorophyllide a (Chlide). This reaction is light-independent. The NB-protein (BchN-BchB) is the catalytic component of the complex. The protein is Light-independent protochlorophyllide reductase subunit N of Rhodopseudomonas palustris (strain HaA2).